The sequence spans 511 residues: 2-isopropylmalate synthase (511 aa).

One can recognise a Pyruvate carboxyltransferase domain in the interval isoleucine 6–phenylalanine 269. Mn(2+)-binding residues include aspartate 15, histidine 203, histidine 205, and asparagine 239. Residues valine 394–alanine 511 form a regulatory domain region.

Belongs to the alpha-IPM synthase/homocitrate synthase family. LeuA type 1 subfamily. Homodimer. Mn(2+) is required as a cofactor.

It is found in the cytoplasm. It catalyses the reaction 3-methyl-2-oxobutanoate + acetyl-CoA + H2O = (2S)-2-isopropylmalate + CoA + H(+). It functions in the pathway amino-acid biosynthesis; L-leucine biosynthesis; L-leucine from 3-methyl-2-oxobutanoate: step 1/4. Catalyzes the condensation of the acetyl group of acetyl-CoA with 3-methyl-2-oxobutanoate (2-ketoisovalerate) to form 3-carboxy-3-hydroxy-4-methylpentanoate (2-isopropylmalate). This chain is 2-isopropylmalate synthase, found in Campylobacter jejuni subsp. jejuni serotype O:2 (strain ATCC 700819 / NCTC 11168).